A 256-amino-acid polypeptide reads, in one-letter code: UPF0246 protein PG_1544 (256 aa).

The protein belongs to the UPF0246 family.

The chain is UPF0246 protein PG_1544 from Porphyromonas gingivalis (strain ATCC BAA-308 / W83).